A 263-amino-acid polypeptide reads, in one-letter code: Hydroxyacylglutathione hydrolase (263 aa).

Zn(2+)-binding residues include H56, H58, D60, H61, H115, D135, and H175.

It belongs to the metallo-beta-lactamase superfamily. Glyoxalase II family. Monomer. The cofactor is Zn(2+).

It carries out the reaction an S-(2-hydroxyacyl)glutathione + H2O = a 2-hydroxy carboxylate + glutathione + H(+). It functions in the pathway secondary metabolite metabolism; methylglyoxal degradation; (R)-lactate from methylglyoxal: step 2/2. Thiolesterase that catalyzes the hydrolysis of S-D-lactoyl-glutathione to form glutathione and D-lactic acid. The sequence is that of Hydroxyacylglutathione hydrolase from Polaromonas sp. (strain JS666 / ATCC BAA-500).